A 446-amino-acid chain; its full sequence is Sterile alpha motif domain-containing protein 7 (446 aa).

The required for localization to nuclear polycomb bodies stretch occupies residues 94–168 (HTARTEMEMY…NLQGNPMLAA (75 aa)). Disordered regions lie at residues 187–207 (NTGNQKALDSDAESSKSQAEE) and 225–277 (KDPD…AWDD). Over residues 232–249 (PSNQKSSETNEKPTTALA) the composition is skewed to polar residues. Positions 327 to 392 (WTVDDVHSFI…SQVSQHVGSM (66 aa)) constitute an SAM domain.

In terms of assembly, monomer, homodimer and homooligomer. Component of a Polycomb group (PcG) multiprotein PRC1-like complex. Interacts with PHC2, NR2E3 and SAMD11. Interacts with RNF1 in a PHC2-dependent manner. Expressed in the retina (at protein level). Expressed in the retinal inner and outer nuclear layers.

Its subcellular location is the nucleus. It localises to the cytoplasm. Functionally, component of a Polycomb group (PcG) multiprotein PRC1-like complex, essential for establishing rod photoreceptor cell identity and function by silencing nonrod gene expression in developing rod photoreceptor cells. Via its association with the PRC1-like complex, promotes epigenetic repressive marks H3K27me3 and H2AK119ub marks in nonrod genes, silencing their transcription. Represses Crx-controlled photoreceptor-specific gene expression. In Homo sapiens (Human), this protein is Sterile alpha motif domain-containing protein 7 (SAMD7).